The following is a 305-amino-acid chain: Dermonecrotic toxin LiSicTox-alphaIA2aiii (305 aa).

An N-terminal signal peptide occupies residues 1–17 (LPYIALILVCWSVLSQA). The propeptide occupies 18 to 25 (AQTDVEER). Histidine 37 is a catalytic residue. Residues glutamate 57 and aspartate 59 each contribute to the Mg(2+) site. Histidine 73 acts as the Nucleophile in catalysis. 2 disulfides stabilise this stretch: cysteine 77–cysteine 83 and cysteine 79–cysteine 222. Position 117 (aspartate 117) interacts with Mg(2+). N-linked (GlcNAc...) asparagine glycosylation is present at asparagine 282.

The protein belongs to the arthropod phospholipase D family. Class II subfamily. Mg(2+) is required as a cofactor. Expressed by the venom gland.

Its subcellular location is the secreted. It carries out the reaction an N-(acyl)-sphingosylphosphocholine = an N-(acyl)-sphingosyl-1,3-cyclic phosphate + choline. The catalysed reaction is an N-(acyl)-sphingosylphosphoethanolamine = an N-(acyl)-sphingosyl-1,3-cyclic phosphate + ethanolamine. The enzyme catalyses a 1-acyl-sn-glycero-3-phosphocholine = a 1-acyl-sn-glycero-2,3-cyclic phosphate + choline. It catalyses the reaction a 1-acyl-sn-glycero-3-phosphoethanolamine = a 1-acyl-sn-glycero-2,3-cyclic phosphate + ethanolamine. Functionally, dermonecrotic toxins cleave the phosphodiester linkage between the phosphate and headgroup of certain phospholipids (sphingolipid and lysolipid substrates), forming an alcohol (often choline) and a cyclic phosphate. This toxin acts on sphingomyelin (SM). It may also act on ceramide phosphoethanolamine (CPE), lysophosphatidylcholine (LPC) and lysophosphatidylethanolamine (LPE), but not on lysophosphatidylserine (LPS), and lysophosphatidylglycerol (LPG). It acts by transphosphatidylation, releasing exclusively cyclic phosphate products as second products. Induces dermonecrosis, hemolysis, increased vascular permeability, edema, inflammatory response, and platelet aggregation. The polypeptide is Dermonecrotic toxin LiSicTox-alphaIA2aiii (Loxosceles intermedia (Brown spider)).